The primary structure comprises 273 residues: Pantothenate synthetase (273 aa).

27 to 34 (MGALHNGH) contacts ATP. His-34 acts as the Proton donor in catalysis. Gln-58 lines the (R)-pantoate pocket. Gln-58 provides a ligand contact to beta-alanine. Position 144–147 (144–147 (GKKD)) interacts with ATP. Residue Gln-150 coordinates (R)-pantoate. ATP-binding positions include Val-173 and 181–184 (LSSR).

It belongs to the pantothenate synthetase family. As to quaternary structure, homodimer.

The protein resides in the cytoplasm. It catalyses the reaction (R)-pantoate + beta-alanine + ATP = (R)-pantothenate + AMP + diphosphate + H(+). Its pathway is cofactor biosynthesis; (R)-pantothenate biosynthesis; (R)-pantothenate from (R)-pantoate and beta-alanine: step 1/1. Functionally, catalyzes the condensation of pantoate with beta-alanine in an ATP-dependent reaction via a pantoyl-adenylate intermediate. The chain is Pantothenate synthetase from Campylobacter fetus subsp. fetus (strain 82-40).